A 349-amino-acid chain; its full sequence is Insulin gene enhancer protein ISL-1 (349 aa).

2 LIM zinc-binding domains span residues 17 to 70 and 79 to 133; these read CVGC…CKRD and CAKC…RADH. Residues 181 to 240 constitute a DNA-binding region (homeobox); it reads TTRVRTVLNEKQLHTLRTCYAANPRPDALMKEQLVEMTGLSPRVIRVWFQNKRCKDKKRS. The LIM-binding domain (LID) stretch occupies residues 262–291; the sequence is GTPMVAASPERHDGGLQANPVEVQSYQPPW. The tract at residues 312 to 349 is disordered; sequence VNFSEGGPGSNSTGSEVASMSSQLPDTPNSMVASPIEA. The segment covering 321-343 has biased composition (polar residues); that stretch reads SNSTGSEVASMSSQLPDTPNSMV.

At neuronal promoters, displaces LDB1 from LHX3 LIM domain to form a ternary complex in which ISL1 contacts both LHX3 and LDB1; allosteric structural changes in the DNA binding domain of LHX3, induced by the ISL1:LHX3 interaction, may explain differences in sequence specificity of the different complexes. Interacts with LHX3. Interacts (via C-terminus) with POU4F2 (via C-terminus) isoform 1. Interacts with POU3F2. Interacts with POU4F3. Interacts (via N-terminal domain) with MLIP; the interaction represses ISL1 transactivator activity. Interacts with GCN5/KAT2A. Interactions of ISL1 with MLIP1 or KAT2A may be mutually exclusive. Ubiquitinated probably by WWP1 E3 ubiquitin ligase; ubiquitination is followed by protein degradation. In terms of processing, phosphorylated. In terms of tissue distribution, expressed in subsets of neurons of the adrenal medulla and dorsal root ganglion, inner nuclear and ganglion cell layers in the retina, the pineal and some regions of the brain.

Its subcellular location is the nucleus. DNA-binding transcriptional activator. Recognizes and binds to the consensus octamer binding site 5'-ATAATTAA-3' in promoter of target genes. Plays a fundamental role in the gene regulatory network essential for retinal ganglion cell (RGC) differentiation. Cooperates with the transcription factor POU4F2 to achieve maximal levels of expression of RGC target genes and RGC fate specification in the developing retina. Involved in the specification of motor neurons in cooperation with LHX3 and LDB1. Binds to insulin gene enhancer sequences. Essential for heart development. Marker of one progenitor cell population that give rise to the outflow tract, right ventricle, a subset of left ventricular cells, and a large number of atrial cells as well, its function is required for these progenitors to contribute to the heart. Controls the expression of FGF and BMP growth factors in this cell population and is required for proliferation and survival of cells within pharyngeal foregut endoderm and adjacent splanchnic mesoderm as well as for migration of cardiac progenitors into the heart. This is Insulin gene enhancer protein ISL-1 (ISL1) from Homo sapiens (Human).